The primary structure comprises 282 residues: MTELVHTRAELAAARDGLTGTVGVVMTMGALHSGHETLLRAARERADHVLVTIFVNPLQFGPDEDFNRYPRTLDVDLEICRRAGVAVVFAPVVTELYPEGKPRVWVAPGQLGEELEGQSRPGFFHGVLTVVLKLLHVTRPDLAFFGEKDYQQLTLVRRMVGDLDVPVEIVGVPTVREPDGLALSSRNRYLSPDERAAALSLSGALRAGAAAAAVGADAGAVLAAAHAAFESGPSGARLDYLVLTDSDLEPGPTAGPARMLVAAWVGTTRLIDNMSVQLAPYS.

An ATP-binding site is contributed by 28-35 (MGALHSGH). The active-site Proton donor is His-35. Gln-59 contacts (R)-pantoate. Residue Gln-59 coordinates beta-alanine. 146–149 (GEKD) contacts ATP. Gln-152 contributes to the (R)-pantoate binding site. ATP-binding positions include Val-175 and 183 to 186 (LSSR).

The protein belongs to the pantothenate synthetase family. In terms of assembly, homodimer.

Its subcellular location is the cytoplasm. It carries out the reaction (R)-pantoate + beta-alanine + ATP = (R)-pantothenate + AMP + diphosphate + H(+). Its pathway is cofactor biosynthesis; (R)-pantothenate biosynthesis; (R)-pantothenate from (R)-pantoate and beta-alanine: step 1/1. Functionally, catalyzes the condensation of pantoate with beta-alanine in an ATP-dependent reaction via a pantoyl-adenylate intermediate. In Salinispora arenicola (strain CNS-205), this protein is Pantothenate synthetase.